The chain runs to 133 residues: Large ribosomal subunit protein uL22 (133 aa).

This sequence belongs to the universal ribosomal protein uL22 family. As to quaternary structure, part of the 50S ribosomal subunit.

This protein binds specifically to 23S rRNA; its binding is stimulated by other ribosomal proteins, e.g. L4, L17, and L20. It is important during the early stages of 50S assembly. It makes multiple contacts with different domains of the 23S rRNA in the assembled 50S subunit and ribosome. In terms of biological role, the globular domain of the protein is located near the polypeptide exit tunnel on the outside of the subunit, while an extended beta-hairpin is found that lines the wall of the exit tunnel in the center of the 70S ribosome. The polypeptide is Large ribosomal subunit protein uL22 (Aquifex pyrophilus).